Here is a 151-residue protein sequence, read N- to C-terminus: FAD synthase (151 aa).

ATP contacts are provided by residues 21 to 22, 26 to 29, and Asp-104; these read TF and HPGH.

This sequence belongs to the archaeal FAD synthase family. Homodimer. Requires a divalent metal cation as cofactor.

It catalyses the reaction FMN + ATP + H(+) = FAD + diphosphate. Its pathway is cofactor biosynthesis; FAD biosynthesis; FAD from FMN: step 1/1. In terms of biological role, catalyzes the transfer of the AMP portion of ATP to flavin mononucleotide (FMN) to produce flavin adenine dinucleotide (FAD) coenzyme. This Methanosarcina acetivorans (strain ATCC 35395 / DSM 2834 / JCM 12185 / C2A) protein is FAD synthase.